Here is a 422-residue protein sequence, read N- to C-terminus: UDP-N-acetylmuramoylalanine--D-glutamate ligase (422 aa).

102–108 (GTNGKTT) lines the ATP pocket.

The protein belongs to the MurCDEF family.

Its subcellular location is the cytoplasm. The enzyme catalyses UDP-N-acetyl-alpha-D-muramoyl-L-alanine + D-glutamate + ATP = UDP-N-acetyl-alpha-D-muramoyl-L-alanyl-D-glutamate + ADP + phosphate + H(+). It participates in cell wall biogenesis; peptidoglycan biosynthesis. Its function is as follows. Cell wall formation. Catalyzes the addition of glutamate to the nucleotide precursor UDP-N-acetylmuramoyl-L-alanine (UMA). The sequence is that of UDP-N-acetylmuramoylalanine--D-glutamate ligase from Helicobacter pylori (strain ATCC 700392 / 26695) (Campylobacter pylori).